A 348-amino-acid polypeptide reads, in one-letter code: Histidinol-phosphate aminotransferase (348 aa).

Lys-211 bears the N6-(pyridoxal phosphate)lysine mark.

The protein belongs to the class-II pyridoxal-phosphate-dependent aminotransferase family. Histidinol-phosphate aminotransferase subfamily. Homodimer. It depends on pyridoxal 5'-phosphate as a cofactor.

The catalysed reaction is L-histidinol phosphate + 2-oxoglutarate = 3-(imidazol-4-yl)-2-oxopropyl phosphate + L-glutamate. It functions in the pathway amino-acid biosynthesis; L-histidine biosynthesis; L-histidine from 5-phospho-alpha-D-ribose 1-diphosphate: step 7/9. The polypeptide is Histidinol-phosphate aminotransferase (Pseudomonas entomophila (strain L48)).